Consider the following 867-residue polypeptide: Inactive tyrosine-protein kinase kin-32 (867 aa).

Positions 3–327 (GLARVFLIGG…GYQMLYNQRD (325 aa)) constitute an FERM domain. Positions 367 to 631 (ITLKELIGGG…IIEDVRQQII (265 aa)) constitute a Protein kinase domain. ATP is bound by residues 373-381 (IGGGQFGNV) and Lys-400. The stretch at 662–691 (TLYRTMEDQKRQAEEDAKWLEQEDDEDEDD) forms a coiled coil. A disordered region spans residues 674 to 729 (AEEDAKWLEQEDDEDEDDQDIDQIPSTSHSSVENIRTSNGYLHHTPTSTRSLRFED). Residues 683-694 (QEDDEDEDDQDI) show a composition bias toward acidic residues. A compositionally biased stretch (polar residues) spans 698–724 (PSTSHSSVENIRTSNGYLHHTPTSTRS).

Belongs to the protein kinase superfamily. Tyr protein kinase family. FAK subfamily. As to expression, expressed in body wall muscles and some neurons in the head.

In terms of biological role, has apparently no tyrosine kinase activity in vitro when expressed in mammalian cells. The protein is Inactive tyrosine-protein kinase kin-32 of Caenorhabditis elegans.